The following is a 60-amino-acid chain: Small ribosomal subunit protein eS31 (60 aa).

The Zn(2+) site is built by C32, C35, C50, and C53. The segment at 32-53 (CPRCGAGVFMGEHKDRFSCGKC) adopts a C4-type zinc-finger fold.

The protein belongs to the eukaryotic ribosomal protein eS31 family. In terms of assembly, part of the 30S ribosomal subunit. Requires Zn(2+) as cofactor.

This chain is Small ribosomal subunit protein eS31, found in Methanocorpusculum labreanum (strain ATCC 43576 / DSM 4855 / Z).